The chain runs to 129 residues: MKLFTGLIFCSLVLGVHSQWLSFLGEAYEGAKDMLRAYSDMREANFKNSDKYFHARGNYDAAQRGPGGAWAAKVISDARENVQRVTDWLKHGDSGHGVEDSRADQAANEWGRSGKDPNHFRPPGLPDKY.

An N-terminal signal peptide occupies residues 1–18; that stretch reads MKLFTGLIFCSLVLGVHS. Pyrrolidone carboxylic acid is present on Gln19. The span at 90–103 shows a compositional bias: basic and acidic residues; it reads KHGDSGHGVEDSRA. A disordered region spans residues 90 to 129; the sequence is KHGDSGHGVEDSRADQAANEWGRSGKDPNHFRPPGLPDKY.

Belongs to the SAA family. Apolipoprotein of the HDL complex.

It localises to the secreted. Functionally, major acute phase reactant. The polypeptide is Serum amyloid A-2 protein (Sus scrofa (Pig)).